The sequence spans 316 residues: Porphobilinogen deaminase (316 aa).

Position 245 is an S-(dipyrrolylmethanemethyl)cysteine (Cys245).

It belongs to the HMBS family. Monomer. The cofactor is dipyrromethane.

It carries out the reaction 4 porphobilinogen + H2O = hydroxymethylbilane + 4 NH4(+). The protein operates within porphyrin-containing compound metabolism; protoporphyrin-IX biosynthesis; coproporphyrinogen-III from 5-aminolevulinate: step 2/4. Its pathway is porphyrin-containing compound metabolism; chlorophyll biosynthesis. Tetrapolymerization of the monopyrrole PBG into the hydroxymethylbilane pre-uroporphyrinogen in several discrete steps. This is Porphobilinogen deaminase from Synechococcus sp. (strain CC9311).